Consider the following 474-residue polypeptide: Cyclin-dependent kinase 18 (474 aa).

Ser-14, Ser-74, Ser-89, Ser-98, Ser-117, and Ser-132 each carry phosphoserine. A disordered region spans residues 44 to 93 (NLQLGPLGRDPPQECSTFSPTDSGEEPGQLSPGVQFQRRQNQRRFSMEDV). The 282-residue stretch at 144-425 (YVKLDKLGEG…AEAALSHSYF (282 aa)) folds into the Protein kinase domain. ATP-binding positions include 150-158 (LGEGTYATV) and Lys-173. The active-site Proton acceptor is Asp-265. 2 positions are modified to phosphoserine: Ser-440 and Ser-443.

It belongs to the protein kinase superfamily. CMGC Ser/Thr protein kinase family. CDC2/CDKX subfamily. Isoform 2 expression is limited to several subcortical nuclei of the basal gangli and the spinal cord. Isoform 1 is widely expressed.

It catalyses the reaction L-seryl-[protein] + ATP = O-phospho-L-seryl-[protein] + ADP + H(+). The enzyme catalyses L-threonyl-[protein] + ATP = O-phospho-L-threonyl-[protein] + ADP + H(+). Functionally, may play a role in signal transduction cascades in terminally differentiated cells. This is Cyclin-dependent kinase 18 (CDK18) from Homo sapiens (Human).